We begin with the raw amino-acid sequence, 90 residues long: UPF0223 protein lmo1058 (90 aa).

The protein belongs to the UPF0223 family.

The protein is UPF0223 protein lmo1058 of Listeria monocytogenes serovar 1/2a (strain ATCC BAA-679 / EGD-e).